The sequence spans 334 residues: Nucleoid-associated protein ESA_01050 (334 aa).

This sequence belongs to the YejK family.

It is found in the cytoplasm. The protein localises to the nucleoid. The protein is Nucleoid-associated protein ESA_01050 of Cronobacter sakazakii (strain ATCC BAA-894) (Enterobacter sakazakii).